The chain runs to 477 residues: Calcium uptake protein 1, mitochondrial (477 aa).

Residues 1–33 (MFRLNTLSALAELAVGSRWYHGASQPTQTKRRL) constitute a mitochondrion transit peptide. The tract at residues 57–107 (AESPPCVNSKKPDTEDKERNKDSGEVSSREGRAADAAAEPYPEDKKKKRSG) is disordered. Over residues 66–89 (KKPDTEDKERNKDSGEVSSREGRA) the composition is skewed to basic and acidic residues. Residues 101–112 (KKKKRSGFRDRK) are polybasic region. The residue at position 124 (serine 124) is a Phosphoserine; by PKB. A k/R-ring region spans residues 128-131 (KIFR). An EF-hand 1 domain is found at 220–255 (TPQRNFEIAFKMFDLNGDGEVDMEEFEQVQSIIRSQ). The Ca(2+) site is built by aspartate 233, asparagine 235, aspartate 237, glutamate 239, and glutamate 244. Residues 261–265 (RHRDR) are k/R-ring. An EF-hand 2; degenerate domain is found at 356–376 (KDGKGLTFQEVENFFTFLKNI). One can recognise an EF-hand 3 domain in the interval 410–445 (LSDHVCDVVFALFDCDGNGELSNKEFVSIMKQRLMR). Residues aspartate 423, aspartate 425, asparagine 427, glutamate 429, and glutamate 434 each contribute to the Ca(2+) site. Arginine 457 bears the Asymmetric dimethylarginine mark. Positions 457 to 467 (RLMQAMWKCAQ) are C-helix region.

This sequence belongs to the MICU1 family. MICU1 subfamily. Heterodimer; disulfide-linked; heterodimerizes with MICU2 or MICU3. Homodimer; disulfide-linked. Component of the uniplex complex, composed of MCU, EMRE/SMDT1, MICU1 and MICU2 (or MICU3) in a 4:4:1:1 stoichiometry. The composition of calcium sensors within the uniplex complex can differ depending on tissues: a MICU1 homodimer can be present instead of the MICU1-MICU2 heterodimer in skeletal-muscle and kidney. MICU1 is recruited to the uniplex complex by EMRE/SMDT1, and it associates with MCU at low calcium levels, occluding the pore of the MCU channel. Associates with the MICOS complex. Interacts with SLC25A23. Interacts with CHCHD4/MIA40; which introduces the interchain disulfide bond with MICU2. Interacts (when methylated) with UCP2; leading to decrease the calcium sensitivity of MICU1. As to quaternary structure, heterodimer; disulfide-linked; heterodimerizes with MICU2 or MICU3. Heterodimerizes with MICU3 in skeletal muscle. Component of the uniplex complex, composed of MCU, EMRE/SMDT1, MICU1 and MICU2 (or MICU3) in a 4:4:1:1 stoichiometry. Also localizes to mitochondrial cristae junctions. Post-translationally, phosphorylation at Ser-124 by AKT1 impairs its maturation and stability. Asymmetric dimethylation at Arg-457 by PRMT1 decreases the calcium sensitivity of MICU1 by promoting interaction with UCP2. In terms of processing, degraded by YME1L1 when not complexed as homodimer or heterodimer. Not degraded when complexed as homodimer or heterodimer; the presence of the interchain disulfide bond protecting MICU1 from degradation by YME1L1. Expressed in skeletal muscle, heart, kidney, liver, brain, lung, fat and spleen. In terms of tissue distribution, specifically expressed in the skeletal muscle.

Its subcellular location is the mitochondrion intermembrane space. It localises to the mitochondrion inner membrane. Its function is as follows. Calcium sensor of the mitochondrial calcium uniporter (MCU) channel, which senses calcium level via its EF-hand domains. MICU1 and MICU2 (or MICU3) form a disulfide-linked heterodimer that stimulates and inhibits MCU activity, depending on the concentration of calcium. At low calcium levels, MICU1 occludes the pore of the MCU channel, preventing mitochondrial calcium uptake. At higher calcium levels, calcium-binding to MICU1 and MICU2 (or MICU3) induces a conformational change that weakens MCU-MICU1 interactions and moves the MICU1-MICU2 heterodimer away from the pore, allowing calcium permeation through the MCU channel. Also required to protect against manganese toxicity by preventing manganese uptake by MCU: mechanistically, manganese-binding to its EF-hand domains does not induce any conformational change, maintaining MCU pore occlusion. Acts as a regulator of mitochondrial cristae structure independently of its ability to regulate the mitochondrial calcium uniporter channel. Regulates glucose-dependent insulin secretion in pancreatic beta-cells by regulating mitochondrial calcium uptake. Induces T-helper 1-mediated autoreactivity, which is accompanied by the release of IFNG. Functionally, isoform that regulates mitochondrial calcium uniporter (MCU) in the skeletal muscle. Compared to other isoforms, this isoform has higher affinity for calcium, promoting mitochondrial calcium uptake at lower calcium concentrations. This allows a rapid response of mitochondrial metabolism and ensures sustained ATP production needed for resistance and strenuous exercise. This chain is Calcium uptake protein 1, mitochondrial, found in Mus musculus (Mouse).